The following is a 322-amino-acid chain: N-acetyl-gamma-glutamyl-phosphate reductase (322 aa).

Residue cysteine 132 is part of the active site.

This sequence belongs to the NAGSA dehydrogenase family. Type 1 subfamily.

It localises to the cytoplasm. The catalysed reaction is N-acetyl-L-glutamate 5-semialdehyde + phosphate + NADP(+) = N-acetyl-L-glutamyl 5-phosphate + NADPH + H(+). It functions in the pathway amino-acid biosynthesis; L-arginine biosynthesis; N(2)-acetyl-L-ornithine from L-glutamate: step 3/4. Catalyzes the NADPH-dependent reduction of N-acetyl-5-glutamyl phosphate to yield N-acetyl-L-glutamate 5-semialdehyde. This Bacteroides fragilis (strain ATCC 25285 / DSM 2151 / CCUG 4856 / JCM 11019 / LMG 10263 / NCTC 9343 / Onslow / VPI 2553 / EN-2) protein is N-acetyl-gamma-glutamyl-phosphate reductase.